A 388-amino-acid chain; its full sequence is Probable E3 ubiquitin-protein ligase LOG2 (388 aa).

A disordered region spans residues 1–43; sequence MGNISSSGGEGRRRRRRNHTAAPPPPPPPPSSSLPPPPLPTEI. Gly2 carries N-myristoyl glycine lipidation. Residues 22 to 40 are compositionally biased toward pro residues; that stretch reads APPPPPPPPSSSLPPPPLP. Positions 159–281 are DAR2 domain; sequence FTFDATVSGR…GEIKIRVVKQ (123 aa). Residues 319–358 form an RING-type; atypical zinc finger; that stretch reads CVICLSEPRDTTVLPCRHMCMCSGCAKVLRFQTNRCPICR. A disordered region spans residues 368-388; the sequence is KVHGNNGSGNNTGQGETVEQE.

It belongs to the RING-type zinc finger family. LOG2 subfamily. Interacts with GDU1. Myristoylated (in vitro). In terms of tissue distribution, expressed in the vascular tissues in both phloem and xylem parenchyma cells.

The protein resides in the cell membrane. The enzyme catalyses S-ubiquitinyl-[E2 ubiquitin-conjugating enzyme]-L-cysteine + [acceptor protein]-L-lysine = [E2 ubiquitin-conjugating enzyme]-L-cysteine + N(6)-ubiquitinyl-[acceptor protein]-L-lysine.. The protein operates within protein modification; protein ubiquitination. Functionally, acts as an E3 ubiquitin-protein ligase, or as part of E3 complex, which accepts ubiquitin from specific E2 ubiquitin-conjugating enzymes and then transfers it to substrates (in vitro). Required for GLUTAMINE DUMPER 1(GDU1)-induced amino acid secretion and for amino acid homeostasis. Ubiquitinates GDU1 (in vitro). The protein is Probable E3 ubiquitin-protein ligase LOG2 (LOG2) of Arabidopsis thaliana (Mouse-ear cress).